The following is a 230-amino-acid chain: Orotidine 5'-phosphate decarboxylase (230 aa).

Substrate-binding positions include Asp-11, Lys-34, Asp-61–Thr-70, Thr-117, Arg-179, Gln-188, Gly-208, and Arg-209. Lys-63 (proton donor) is an active-site residue.

The protein belongs to the OMP decarboxylase family. Type 1 subfamily. Homodimer.

The catalysed reaction is orotidine 5'-phosphate + H(+) = UMP + CO2. It functions in the pathway pyrimidine metabolism; UMP biosynthesis via de novo pathway; UMP from orotate: step 2/2. In terms of biological role, catalyzes the decarboxylation of orotidine 5'-monophosphate (OMP) to uridine 5'-monophosphate (UMP). The chain is Orotidine 5'-phosphate decarboxylase from Streptococcus sanguinis (strain SK36).